The sequence spans 696 residues: Interleukin-1 receptor accessory protein-like 1 (696 aa).

Residues 1-18 (MKAPIPHLILLYATFTQS) form the signal peptide. In terms of domain architecture, Ig-like 1 spans 19–134 (LKVVTKRGSA…YCMKVSISLT (116 aa)). The Extracellular portion of the chain corresponds to 19–357 (LKVVTKRGSA…LLHKRELMYT (339 aa)). Disulfide bonds link C31–C126 and C53–C118. Residues N63, N122, and N138 are each glycosylated (N-linked (GlcNAc...) asparagine). 2 cysteine pairs are disulfide-bonded: C143–C185 and C164–C216. Ig-like domains are found at residues 143 to 232 (CYNS…TELT) and 242 to 350 (PKLL…VLLH). N-linked (GlcNAc...) asparagine glycosylation is found at N213, N264, and N331. An intrachain disulfide couples C267 to C334. Residues 358–378 (VELAGGLGAILLLLVCLVTIY) form a helical membrane-spanning segment. Residues 379-696 (KCYKIEIMLF…RETSISSVIW (318 aa)) lie on the Cytoplasmic side of the membrane. Positions 403-559 (KDYDAYLSYT…KFWKRLQYEM (157 aa)) constitute a TIR domain. Residue E491 is part of the active site. The segment at 549–644 (SKFWKRLQYE…TGTLPLTSIG (96 aa)) is interaction with NCS1. Residues 659 to 680 (GQRPQTKSSREQNPDEAHTNSA) are disordered. Positions 666–676 (SSREQNPDEAH) are enriched in basic and acidic residues.

The protein belongs to the interleukin-1 receptor family. In terms of assembly, homodimer. Interacts (calcium-independent) with NCS1/FREQ. Interacts (via the first immunoglobilin domain) with PTPRD (via the second immunoglobilin domain); this interaction is PTPRD-splicing-dependent and induces pre- and post-synaptic differentiation of neurons and is required for IL1RAPL1-mediated synapse formation.

The protein localises to the cell membrane. The protein resides in the cytoplasm. It localises to the cell projection. It is found in the axon. Its subcellular location is the dendrite. The catalysed reaction is NAD(+) + H2O = ADP-D-ribose + nicotinamide + H(+). In terms of biological role, may regulate secretion and presynaptic differentiation through inhibition of the activity of N-type voltage-gated calcium channel. May activate the MAP kinase JNK. Plays a role in neurite outgrowth. During dendritic spine formation can bidirectionally induce pre- and post-synaptic differentiation of neurons by trans-synaptically binding to PTPRD. The chain is Interleukin-1 receptor accessory protein-like 1 (IL1RAPL1) from Pongo pygmaeus (Bornean orangutan).